A 356-amino-acid polypeptide reads, in one-letter code: Arginine kinase (356 aa).

The 84-residue stretch at Glu8–Gly91 folds into the Phosphagen kinase N-terminal domain. Residue Gly64–Tyr68 participates in substrate binding. Residues Tyr119–Leu356 form the Phosphagen kinase C-terminal domain. Residues Ser122–Arg126 and His185 contribute to the ATP site. Glu225 provides a ligand contact to substrate. Residue Arg229 coordinates ATP. Cys271 is a substrate binding site. ATP is bound by residues Arg280–His284 and Arg309–Glu314. Glu314 provides a ligand contact to substrate.

Belongs to the ATP:guanido phosphotransferase family.

It carries out the reaction L-arginine + ATP = N(omega)-phospho-L-arginine + ADP + H(+). The sequence is that of Arginine kinase (ARGK) from Schistocerca americana (American grasshopper).